Consider the following 107-residue polypeptide: High mobility group protein HMG-I/HMG-Y (107 aa).

Over residues 1–13 (MSESVSKSSQPLA) the composition is skewed to polar residues. The segment at 1–107 (MSESVSKSSQ…ISQESSEEEQ (107 aa)) is disordered. S2 carries the N-acetylserine modification. K7 bears the N6-acetyllysine mark. S8 is modified (ADP-ribosylserine). An ADP-ribosylserine; alternate modification is found at S9. A Phosphoserine; alternate modification is found at S9. K15 carries the post-translational modification N6-acetyllysine; alternate. Residue K15 forms a Glycyl lysine isopeptide (Lys-Gly) (interchain with G-Cter in SUMO2); alternate linkage. Positions 15-24 (KQEKDGTEKR) are enriched in basic and acidic residues. The a.T hook 1 DNA-binding region spans 21–31 (TEKRGRGRPRK). At R26 the chain carries Asymmetric dimethylarginine; alternate. Position 26 is an omega-N-methylarginine; alternate (R26). The residue at position 26 (R26) is a Symmetric dimethylarginine; alternate. S36 bears the Phosphoserine; by HIPK2 and CDC2 mark. T39 carries the post-translational modification Phosphothreonine. 2 positions are modified to phosphoserine: S44 and S49. A Phosphothreonine; by HIPK2 and CDC2 modification is found at T53. DNA-binding regions (a.T hook) lie at residues 53 to 63 (TPKRPRGRPKG) and 78 to 89 (TPGRKPRGRPKK). The tract at residues 53–77 (TPKRPRGRPKGSKNKGTAKTRKVTT) is interaction with HIPK2. Positions 55–74 (KRPRGRPKGSKNKGTAKTRK) are enriched in basic residues. 2 positions are modified to asymmetric dimethylarginine; by PRMT6; alternate: R58 and R60. 2 positions are modified to omega-N-methylarginine; by PRMT6; alternate: R58 and R60. Phosphothreonine; by HIPK2 and CDC2 is present on T78. Over residues 93-107 (EEEEGISQESSEEEQ) the composition is skewed to acidic residues. 3 positions are modified to phosphoserine: S99, S102, and S103.

Belongs to the HMGA family. As to quaternary structure, interacts with HIPK2. Isoforms HMG-I and HMG-Y can be phosphorylated by HIPK2. Phosphorylation may modulate DNA-binding affinity. Post-translationally, methylation at Arg-58 is mutually exclusive with methylation at Arg-60.

Its subcellular location is the nucleus. It is found in the chromosome. In terms of biological role, HMG-I/Y bind preferentially to the minor groove of A+T rich regions in double-stranded DNA. It is suggested that these proteins could function in nucleosome phasing and in the 3'-end processing of mRNA transcripts. They are also involved in the transcription regulation of genes containing, or in close proximity to A+T-rich regions. This is High mobility group protein HMG-I/HMG-Y (Hmga1) from Rattus norvegicus (Rat).